An 88-amino-acid polypeptide reads, in one-letter code: Putative regulatory protein Ava_1474 (88 aa).

This sequence belongs to the RemA family.

This Trichormus variabilis (strain ATCC 29413 / PCC 7937) (Anabaena variabilis) protein is Putative regulatory protein Ava_1474.